A 248-amino-acid chain; its full sequence is MSRLPVVALLAAAGRGTRLGGPIPKAFVTLRGRSLVERSLRAMLTSEVVDEVIILVSPDMEDYARELLTRRGLLNDPEGVRVRLVHGGGERADSVWAGLQAIDHDDAIVLIHDSARALTPPGMIARVARMVADGAPAVIPVVPVADTIKRVDGSTVVDTPNRADLRAVQTPQGFLLSRLRAANEKFFATPDPGFIPTDDASLMEWYGVEVTCVQGDPMAFKVTTPIDMMLAQRITDEAEPTIFEVPGD.

It belongs to the IspD/TarI cytidylyltransferase family. IspD subfamily.

It catalyses the reaction 2-C-methyl-D-erythritol 4-phosphate + CTP + H(+) = 4-CDP-2-C-methyl-D-erythritol + diphosphate. It participates in isoprenoid biosynthesis; isopentenyl diphosphate biosynthesis via DXP pathway; isopentenyl diphosphate from 1-deoxy-D-xylulose 5-phosphate: step 2/6. Functionally, catalyzes the formation of 4-diphosphocytidyl-2-C-methyl-D-erythritol from CTP and 2-C-methyl-D-erythritol 4-phosphate (MEP). This chain is 2-C-methyl-D-erythritol 4-phosphate cytidylyltransferase, found in Corynebacterium efficiens (strain DSM 44549 / YS-314 / AJ 12310 / JCM 11189 / NBRC 100395).